The chain runs to 464 residues: Peptidase inhibitor 16 (464 aa).

The N-terminal stretch at 1 to 27 is a signal peptide; that stretch reads MHGSGSLLACLLPPLLLLGAAPGPAGA. An SCP domain is found at 37–165; it reads VELHNLYRTQ…TNIHLLVCNY (129 aa). N114 is a glycosylation site (N-linked (GlcNAc...) asparagine). Disordered stretches follow at residues 208-241, 260-281, 304-347, and 386-412; these read DLSSLVPEAPSSLATEASSSRREGIDSSLATEPP, VETKAPSSLVTEDSPSMATKTP, PATL…LMGT, and TTLKHKGHSSSKSLSNSPSASATANAV. The span at 311-325 shows a compositional bias: basic and acidic residues; it reads STHDPIPKSADKEAS. Positions 395 to 411 are enriched in low complexity; sequence SSKSLSNSPSASATANA.

It belongs to the CRISP family. In terms of assembly, interacts with PSP94/MSMB. In terms of processing, N-glycosylated.

It is found in the secreted. Functionally, may inhibit cardiomyocyte growth. This Bos taurus (Bovine) protein is Peptidase inhibitor 16 (PI16).